Consider the following 239-residue polypeptide: Myogenic factor 6 (239 aa).

The tract at residues 28 to 59 is disordered; the sequence is PGVSPLYEGNDSPLSPGQDPVPSETGCESSGE. The region spanning 92–143 is the bHLH domain; sequence DRRKAATLRERRRLKKINEAFDALKKKTVPNPNQRLPKVEILRSAINYIEKL. Over residues 182–196 the composition is skewed to polar residues; that stretch reads CQSWQENPDHSSSQM. The segment at 182 to 239 is disordered; the sequence is CQSWQENPDHSSSQMAGHREGAVLESSESSSLRRLSSIVDSISTEEPKARCPSQISEK. The span at 204–223 shows a compositional bias: low complexity; that stretch reads VLESSESSSLRRLSSIVDSI.

In terms of assembly, efficient DNA binding requires dimerization with another bHLH protein.

The protein resides in the nucleus. Functionally, involved in muscle differentiation (myogenic factor). Induces fibroblasts to differentiate into myoblasts. Probable sequence specific DNA-binding protein. This is Myogenic factor 6 (myf6) from Danio rerio (Zebrafish).